Reading from the N-terminus, the 118-residue chain is V-type proton ATPase subunit G 3 (118 aa).

Residues Met-1–Leu-12 are compositionally biased toward polar residues. Positions Met-1 to Lys-37 are disordered. Positions Ser-3–Gly-53 form a coiled coil. The span at Ala-14–Lys-26 shows a compositional bias: basic and acidic residues.

Belongs to the V-ATPase G subunit family. V-ATPase is a heteromultimeric enzyme made up of two complexes: the ATP-hydrolytic V1 complex and the proton translocation V0 complex. The V1 complex consists of three catalytic AB heterodimers that form a heterohexamer, three peripheral stalks each consisting of EG heterodimers, one central rotor including subunits D and F, and the regulatory subunits C and H. The proton translocation complex V0 consists of the proton transport subunit a, a ring of proteolipid subunits c9c'', rotary subunit d, subunits e and f, and two accessory subunits.

Functionally, subunit of the V1 complex of vacuolar(H+)-ATPase (V-ATPase), a multisubunit enzyme composed of a peripheral complex (V1) that hydrolyzes ATP and a membrane integral complex (V0) that translocates protons. V-ATPase is responsible for acidifying and maintaining the pH of intracellular compartments and in some cell types, is targeted to the plasma membrane, where it is responsible for acidifying the extracellular environment. In Xenopus tropicalis (Western clawed frog), this protein is V-type proton ATPase subunit G 3 (atp6v1g3).